Here is a 247-residue protein sequence, read N- to C-terminus: ATP synthase subunit a, chloroplastic (247 aa).

Helical transmembrane passes span 38–58, 95–115, 134–154, 199–219, and 220–240; these read QVLI…IIAV, VPFI…GALL, INTT…AGLT, LVVV…VMFL, and GLFT…AYIG.

The protein belongs to the ATPase A chain family. As to quaternary structure, F-type ATPases have 2 components, CF(1) - the catalytic core - and CF(0) - the membrane proton channel. CF(1) has five subunits: alpha(3), beta(3), gamma(1), delta(1), epsilon(1). CF(0) has four main subunits: a, b, b' and c.

The protein resides in the plastid. The protein localises to the chloroplast thylakoid membrane. Key component of the proton channel; it plays a direct role in the translocation of protons across the membrane. The polypeptide is ATP synthase subunit a, chloroplastic (Ranunculus macranthus (Large buttercup)).